Reading from the N-terminus, the 595-residue chain is MRTCYTGEVCRDHLGQTVTLYGWVNRRRDHGGVIFIDLRDRAGLAQIVFDPDNAAFATAERLRNEFCIRVTGLVRPRPEGTANPELASGEVEVLCKEVEILNASITPPFQLDDDNLSETTRLTHRVLDLRRPQMQRNLMLRYRVSIEVRKFLDQLGFIDIETPMLTKSTPEGARDYLVPSRVNAGHFFALPQSPQLFKQMLMVSGFDRYYQITKCFRDEDLRADRQPEFTQIDCETSFLNEVEIRQIFEDMIRHVFKTVQNVELPAPFPQMTWTEAMQRYGSDKPDLRVSLEFTDVTDVMRDVDFKVFAAAATAPGSRVVALRVPGGAELSRSEIDAYTQFVGIYGAKGLAYIKVNDASKGREGLQSPIVKNLHDAALAELLKRSGAQSGDIIFFGADRAKIVNDAIGALRVKIGHSEFGKKAGLASSDWKPLWVVDFPMFEYDEEDGRYTAAHHPFTSPKDGHEDFLESDPSKAFAKAYDMVLNGWEIGGGSVRIHREEVQSKVFRALKIGAEEAREKFGFLLDALQYGAPPHGGIAFGLDRIVTMMTGAESIRDVIAFPKTQRAQCLLTQAPSEVDEKQLRELHIRLRNVEVK.

Glutamate 171 serves as a coordination point for L-aspartate. Residues 195 to 198 (QLFK) are aspartate. Arginine 217 is an L-aspartate binding site. ATP-binding positions include 217 to 219 (RDE) and glutamine 226. Histidine 454 lines the L-aspartate pocket. Position 488 (glutamate 488) interacts with ATP. Arginine 495 lines the L-aspartate pocket. ATP is bound at residue 540 to 543 (GLDR).

The protein belongs to the class-II aminoacyl-tRNA synthetase family. Type 1 subfamily. Homodimer.

It is found in the cytoplasm. It catalyses the reaction tRNA(Asx) + L-aspartate + ATP = L-aspartyl-tRNA(Asx) + AMP + diphosphate. Its function is as follows. Aspartyl-tRNA synthetase with relaxed tRNA specificity since it is able to aspartylate not only its cognate tRNA(Asp) but also tRNA(Asn). Reaction proceeds in two steps: L-aspartate is first activated by ATP to form Asp-AMP and then transferred to the acceptor end of tRNA(Asp/Asn). The sequence is that of Aspartate--tRNA(Asp/Asn) ligase from Bordetella petrii (strain ATCC BAA-461 / DSM 12804 / CCUG 43448).